We begin with the raw amino-acid sequence, 232 residues long: Large ribosomal subunit protein uL1 (232 aa).

This sequence belongs to the universal ribosomal protein uL1 family. Part of the 50S ribosomal subunit.

In terms of biological role, binds directly to 23S rRNA. The L1 stalk is quite mobile in the ribosome, and is involved in E site tRNA release. Functionally, protein L1 is also a translational repressor protein, it controls the translation of the L11 operon by binding to its mRNA. The polypeptide is Large ribosomal subunit protein uL1 (Chlamydia pneumoniae (Chlamydophila pneumoniae)).